The sequence spans 179 residues: Viral interleukin-10 homolog (179 aa).

A signal peptide spans M1 to A18. 2 disulfides stabilise this stretch: C30-C127 and C80-C133. N-linked (GlcNAc...) asparagine; by host glycosylation is found at N100 and N135.

Belongs to the IL-10 family.

Its subcellular location is the secreted. In terms of biological role, down-regulates the expression of the TAP1 gene (transporter associated with antigen processing), thereby affecting the transport of peptides into the endoplasmic reticulum and subsequent peptide loading by MHC class I molecules. In consequence, infected cells are masked for immune recognition by cytotoxic T-lymphocytes. This is Viral interleukin-10 homolog from Equus caballus (Horse).